Consider the following 235-residue polypeptide: Putative HAD-hydrolase YfnB (235 aa).

The Nucleophile role is filled by Asp-10.

This sequence belongs to the HAD-like hydrolase superfamily. YjjG family.

The sequence is that of Putative HAD-hydrolase YfnB (yfnB) from Bacillus subtilis (strain 168).